The sequence spans 148 residues: SsrA-binding protein (148 aa).

Belongs to the SmpB family.

Its subcellular location is the cytoplasm. In terms of biological role, required for rescue of stalled ribosomes mediated by trans-translation. Binds to transfer-messenger RNA (tmRNA), required for stable association of tmRNA with ribosomes. tmRNA and SmpB together mimic tRNA shape, replacing the anticodon stem-loop with SmpB. tmRNA is encoded by the ssrA gene; the 2 termini fold to resemble tRNA(Ala) and it encodes a 'tag peptide', a short internal open reading frame. During trans-translation Ala-aminoacylated tmRNA acts like a tRNA, entering the A-site of stalled ribosomes, displacing the stalled mRNA. The ribosome then switches to translate the ORF on the tmRNA; the nascent peptide is terminated with the 'tag peptide' encoded by the tmRNA and targeted for degradation. The ribosome is freed to recommence translation, which seems to be the essential function of trans-translation. The chain is SsrA-binding protein from Ehrlichia canis (strain Jake).